The following is an 809-amino-acid chain: Chloride channel protein F (809 aa).

Residues 1-65 (MSTSKYSKMI…SWAKFARLNN (65 aa)) are Cytoplasmic-facing. Transmembrane regions (helical) follow at residues 66-86 (FYIWLFLAAVGLLGSIYLVAV), 110-130 (LQYLSFIAWTVALATGSCFII), 152-172 (FWNPFVVAPMVLLWKTIGLLL), 218-238 (AACCALGVAATFGSPIGGVLF), 246-266 (FYLISNYWRAFFTATVGAVGI), 295-315 (LIAFIILGVLCGLLASLFISL), 333-353 (ITPFGEVIIVAAATAILSFPL), 395-415 (GIILACFLYVVVKLVLTAVSI), 425-445 (IPLFAIGSAVGRFVGELMLVL), 459-479 (VVGAAALCGGATRTVSSAMII), and 486-506 (LTYMVPVLLGVVLSCGIGNLL). Positions 539–597 (MKRDLYYVCQNTTLSQISNLLKRVDEHSIPVVSSDNDLQLIGTISTTTLEEVIAYHERL) constitute a CBS 1 domain. Disordered stretches follow at residues 604–646 (PLSL…NNQN) and 692–729 (NNNFSDNNNNYNNNNYNNNNNNNNDNNTNNDNNINNNS). A compositionally biased stretch (low complexity) spans 620–646 (NDNINNNQNNNNNNNNNNNNNNSNNQN). The 54-residue stretch at 756–809 (IDSSPFQIQETMPVRKIVFMFMMLGGNILYVTNKGKLTGVVAKTELVHQNNNKH) folds into the CBS 2 domain.

The protein belongs to the chloride channel (TC 2.A.49) family.

It localises to the membrane. Voltage-gated chloride channel. Chloride channels may have several functions including the regulation of cell volume, membrane potential stabilization and signal transduction. This is Chloride channel protein F (clcF) from Dictyostelium discoideum (Social amoeba).